We begin with the raw amino-acid sequence, 698 residues long: Serine/alanine racemase (698 aa).

Residues 1-10 (MKNKGIDQFR) are Cytoplasmic-facing. Residues 11 to 31 (VIAAMMVVAIHCLPLHYLWPE) form a helical membrane-spanning segment. Topologically, residues 32–42 (GDILITLTIFR) are extracellular. The helical transmembrane segment at 43–63 (VAVPFFFMISGYYVFAELAVA) threads the bilayer. Topologically, residues 64-81 (NSYPSRQRVFNFIKKQLK) are cytoplasmic. The helical transmembrane segment at 82 to 102 (VYLLATLMFLPLALYSQTIGF) threads the bilayer. Over 103 to 121 (DLPVGTLVQVLLVNGILYH) the chain is Extracellular. Residues 122 to 142 (LWYFPALITGSLLLTSLLIHV) traverse the membrane as a helical segment. At 143-147 (SFKKV) the chain is on the cytoplasmic side. The chain crosses the membrane as a helical span at residues 148–168 (FWLAAGLYLIGLGGDSWFGLI). Over 169–183 (QQTPIEPFYTAVFHL) the chain is Extracellular. The helical transmembrane segment at 184–204 (LDGTRNGIFFTPLFLCLGVLV) threads the bilayer. Residues 205-216 (RKQSEKRSLSKT) are Cytoplasmic-facing. The chain crosses the membrane as a helical span at residues 217–237 (ALFFLISLIGLLIESAYLHGF). The Extracellular portion of the chain corresponds to 238 to 244 (SIPKHDS). Residues 245 to 265 (MYLFLPVVLFFLFPLILRWHP) form a helical membrane-spanning segment. Topologically, residues 266 to 274 (HRTWKHPGQ) are cytoplasmic. The helical transmembrane segment at 275-295 (LSLWLYLLHPYTIAGTHFLSQ) threads the bilayer. The Extracellular segment spans residues 296–301 (KISILQ). A helical transmembrane segment spans residues 302–322 (NNLINYLVVLILTIGFICLFL). At 323 to 698 (RQKHSWFRHK…IGPRVSARIK (376 aa)) the chain is on the cytoplasmic side. Positions 332-698 (KQTTPVKRAV…IGPRVSARIK (367 aa)) are racemase. Lys371 functions as the Proton acceptor in the catalytic mechanism. An N6-(pyridoxal phosphate)lysine modification is found at Lys371. Arg465 lines the substrate pocket. Catalysis depends on Tyr597, which acts as the Proton acceptor. Met646 lines the substrate pocket.

This sequence in the N-terminal section; belongs to the acyltransferase 3 family. The protein in the C-terminal section; belongs to the alanine racemase family. As to quaternary structure, homodimer. It depends on pyridoxal 5'-phosphate as a cofactor.

It localises to the cell membrane. It carries out the reaction L-alanine = D-alanine. The enzyme catalyses L-serine = D-serine. It functions in the pathway amino-acid biosynthesis; D-alanine biosynthesis; D-alanine from L-alanine: step 1/1. In terms of biological role, catalyzes the interconversion of L-serine and D-serine, and L-alanine and D-alanine. L-alanine is racemized at a rate that is 14% of that of L-serine. Together with VanC/VanC1 and VanXYC, required for vancomycin resistance in E.gallinarum strain BM4174. The sequence is that of Serine/alanine racemase from Enterococcus gallinarum.